We begin with the raw amino-acid sequence, 280 residues long: Tryptophan synthase alpha chain (280 aa).

Active-site proton acceptor residues include glutamate 50 and aspartate 61.

It belongs to the TrpA family. Tetramer of two alpha and two beta chains.

It carries out the reaction (1S,2R)-1-C-(indol-3-yl)glycerol 3-phosphate + L-serine = D-glyceraldehyde 3-phosphate + L-tryptophan + H2O. It functions in the pathway amino-acid biosynthesis; L-tryptophan biosynthesis; L-tryptophan from chorismate: step 5/5. In terms of biological role, the alpha subunit is responsible for the aldol cleavage of indoleglycerol phosphate to indole and glyceraldehyde 3-phosphate. This is Tryptophan synthase alpha chain from Methylorubrum extorquens (strain CM4 / NCIMB 13688) (Methylobacterium extorquens).